Here is an 82-residue protein sequence, read N- to C-terminus: MFEKKKRLGLIVYLYYNRDARKLNKYGNVVYHSRRMRYSVLYIAQDETDKIIEEIGALKFVKKVLPSYIDTIDQNFVGSLMR.

It belongs to the UPF0298 family.

The protein resides in the cytoplasm. In Streptococcus mutans serotype c (strain ATCC 700610 / UA159), this protein is UPF0298 protein SMU_1670c.